A 217-amino-acid chain; its full sequence is Probable GTP-binding protein EngB (217 aa).

One can recognise an EngB-type G domain in the interval 44 to 217 (DRVEVCFAGR…TLRSIIAHLE (174 aa)). GTP contacts are provided by residues 52–59 (GRSNVGKS), 79–83 (GRTQE), 97–100 (DLPG), 164–167 (TKAD), and 198–200 (TSS). Positions 59 and 81 each coordinate Mg(2+).

It belongs to the TRAFAC class TrmE-Era-EngA-EngB-Septin-like GTPase superfamily. EngB GTPase family. The cofactor is Mg(2+).

Functionally, necessary for normal cell division and for the maintenance of normal septation. The polypeptide is Probable GTP-binding protein EngB (Ruegeria pomeroyi (strain ATCC 700808 / DSM 15171 / DSS-3) (Silicibacter pomeroyi)).